The primary structure comprises 237 residues: Ras-related protein RABA3 (237 aa).

35–42 (GDSAVGKT) is a binding site for GTP. An Effector region motif is present at residues 57–65 (SKSTIGVEF). Residues 83-87 (DTAGQ), 141-144 (NKAD), and 172-173 (SA) each bind GTP. 2 S-geranylgeranyl cysteine lipidation sites follow: C235 and C237. C237 carries the post-translational modification Cysteine methyl ester.

It belongs to the small GTPase superfamily. Rab family. Expressed in root tips.

Its subcellular location is the endosome membrane. The protein localises to the golgi apparatus. It localises to the trans-Golgi network membrane. Intracellular vesicle trafficking and protein transport. The sequence is that of Ras-related protein RABA3 (RABA3) from Arabidopsis thaliana (Mouse-ear cress).